Here is a 37-residue protein sequence, read N- to C-terminus: Cytochrome b6-f complex subunit 5 (37 aa).

Residues 5–25 form a helical membrane-spanning segment; the sequence is LLCGIVLGLIPITLAGLFMAA.

Belongs to the PetG family. As to quaternary structure, the 4 large subunits of the cytochrome b6-f complex are cytochrome b6, subunit IV (17 kDa polypeptide, PetD), cytochrome f and the Rieske protein, while the 4 small subunits are PetG, PetL, PetM and PetN. The complex functions as a dimer.

The protein resides in the cellular thylakoid membrane. Component of the cytochrome b6-f complex, which mediates electron transfer between photosystem II (PSII) and photosystem I (PSI), cyclic electron flow around PSI, and state transitions. PetG is required for either the stability or assembly of the cytochrome b6-f complex. The polypeptide is Cytochrome b6-f complex subunit 5 (Synechococcus elongatus (strain ATCC 33912 / PCC 7942 / FACHB-805) (Anacystis nidulans R2)).